We begin with the raw amino-acid sequence, 272 residues long: Tryptophan synthase alpha chain (272 aa).

Catalysis depends on proton acceptor residues glutamate 49 and aspartate 60.

The protein belongs to the TrpA family. In terms of assembly, tetramer of two alpha and two beta chains.

The catalysed reaction is (1S,2R)-1-C-(indol-3-yl)glycerol 3-phosphate + L-serine = D-glyceraldehyde 3-phosphate + L-tryptophan + H2O. Its pathway is amino-acid biosynthesis; L-tryptophan biosynthesis; L-tryptophan from chorismate: step 5/5. Its function is as follows. The alpha subunit is responsible for the aldol cleavage of indoleglycerol phosphate to indole and glyceraldehyde 3-phosphate. The chain is Tryptophan synthase alpha chain from Polaromonas sp. (strain JS666 / ATCC BAA-500).